A 458-amino-acid polypeptide reads, in one-letter code: MAAMPLKAQYQEMVTFEDVAVHFTKTEWTGLSPAQRALYRSVMLENFGNLTALGYPVPKPALISLLERGDMAWGLEAQDDPPAERTKNVCKDVETNIDSESTLIQGISEERDGMMSHGQLKSVPQRTDFPETRNVEKHQDIPTVKNIQGKVPRIPCARKPFICEECGKSFSYFSYYARHQRIHTGEKPFECSECGKAFNGNSSLIRHQRIHTGERPYQCEECGRAFNDNANLIRHQRIHSGDRPYYCTECGNSFTSSSEFVIHQRIHTGEKPYECNECGKAFVGNSPLLRHQKIHTGEKPYECNECGKSFGRTSHLSQHQRIHTGEKPYSCKVCGQAFNFHTKLTRHQRIHSEEKPFDCVDCGKAFSAQEQLKRHLRIHTQESSYVCDECGKALTSKRNLHQHQRIHTGEKPYECSKYEKAFGTSSQLGHLEHVYSGEKPVLDICRFGLPEFFTPFYW.

One can recognise a KRAB domain in the interval 14–85 (VTFEDVAVHF…EAQDDPPAER (72 aa)). 9 consecutive C2H2-type zinc fingers follow at residues 161–183 (FICEECGKSFSYFSYYARHQRIH), 189–211 (FECSECGKAFNGNSSLIRHQRIH), 217–239 (YQCEECGRAFNDNANLIRHQRIH), 245–267 (YYCTECGNSFTSSSEFVIHQRIH), 273–295 (YECNECGKAFVGNSPLLRHQKIH), 301–323 (YECNECGKSFGRTSHLSQHQRIH), 329–351 (YSCKVCGQAFNFHTKLTRHQRIH), 357–379 (FDCVDCGKAFSAQEQLKRHLRIH), and 385–407 (YVCDECGKALTSKRNLHQHQRIH). A C2H2-type 10; atypical zinc finger spans residues 413-433 (YECSKYEKAFGTSSQLGHLEH).

This sequence belongs to the krueppel C2H2-type zinc-finger protein family.

Its subcellular location is the nucleus. Functionally, may be involved in transcriptional regulation. The chain is Zinc finger protein 19 (ZNF19) from Homo sapiens (Human).